A 457-amino-acid polypeptide reads, in one-letter code: tRNA-2-methylthio-N(6)-dimethylallyladenosine synthase (457 aa).

The region spanning 3 to 120 is the MTTase N-terminal domain; that stretch reads KKVYVKTFGC…LPQMIDKRRE (118 aa). Positions 12, 49, 83, 157, 161, and 164 each coordinate [4Fe-4S] cluster. The Radical SAM core domain occupies 143–377; sequence RVDGPSAFVS…QATIEENVQR (235 aa). The TRAM domain maps to 380 to 447; that stretch reads DSMVGKIERI…PHSLRGELVL (68 aa).

It belongs to the methylthiotransferase family. MiaB subfamily. In terms of assembly, monomer. Requires [4Fe-4S] cluster as cofactor.

It localises to the cytoplasm. The catalysed reaction is N(6)-dimethylallyladenosine(37) in tRNA + (sulfur carrier)-SH + AH2 + 2 S-adenosyl-L-methionine = 2-methylsulfanyl-N(6)-dimethylallyladenosine(37) in tRNA + (sulfur carrier)-H + 5'-deoxyadenosine + L-methionine + A + S-adenosyl-L-homocysteine + 2 H(+). Functionally, catalyzes the methylthiolation of N6-(dimethylallyl)adenosine (i(6)A), leading to the formation of 2-methylthio-N6-(dimethylallyl)adenosine (ms(2)i(6)A) at position 37 in tRNAs that read codons beginning with uridine. The sequence is that of tRNA-2-methylthio-N(6)-dimethylallyladenosine synthase from Paraburkholderia phytofirmans (strain DSM 17436 / LMG 22146 / PsJN) (Burkholderia phytofirmans).